The sequence spans 658 residues: UvrABC system protein C (658 aa).

Positions 62–140 (PKPGVYRMLD…IKRFRPPYNV (79 aa)) constitute a GIY-YIG domain. Residues 250–285 (GAVQREIEAQMHKAAEDLDFERAAMLRDRLRAATFI) form the UVR domain.

This sequence belongs to the UvrC family. In terms of assembly, interacts with UvrB in an incision complex.

Its subcellular location is the cytoplasm. The UvrABC repair system catalyzes the recognition and processing of DNA lesions. UvrC both incises the 5' and 3' sides of the lesion. The N-terminal half is responsible for the 3' incision and the C-terminal half is responsible for the 5' incision. The polypeptide is UvrABC system protein C (Novosphingobium aromaticivorans (strain ATCC 700278 / DSM 12444 / CCUG 56034 / CIP 105152 / NBRC 16084 / F199)).